The sequence spans 208 residues: PITH domain-containing protein ZK353.9 (208 aa).

Residues 17–189 (EVPGDDVYRY…RIAIATYESR (173 aa)) enclose the PITH domain.

Belongs to the PITHD1 family.

The protein is PITH domain-containing protein ZK353.9 of Caenorhabditis elegans.